The sequence spans 277 residues: 3-methyl-2-oxobutanoate hydroxymethyltransferase (277 aa).

Residues Asp53 and Asp96 each coordinate Mg(2+). 3-methyl-2-oxobutanoate contacts are provided by residues 53 to 54, Asp96, and Lys126; that span reads DS. Residue Glu128 coordinates Mg(2+). Catalysis depends on Glu195, which acts as the Proton acceptor.

Belongs to the PanB family. As to quaternary structure, homodecamer; pentamer of dimers. The cofactor is Mg(2+).

The protein localises to the cytoplasm. The enzyme catalyses 3-methyl-2-oxobutanoate + (6R)-5,10-methylene-5,6,7,8-tetrahydrofolate + H2O = 2-dehydropantoate + (6S)-5,6,7,8-tetrahydrofolate. The protein operates within cofactor biosynthesis; (R)-pantothenate biosynthesis; (R)-pantoate from 3-methyl-2-oxobutanoate: step 1/2. Catalyzes the reversible reaction in which hydroxymethyl group from 5,10-methylenetetrahydrofolate is transferred onto alpha-ketoisovalerate to form ketopantoate. The polypeptide is 3-methyl-2-oxobutanoate hydroxymethyltransferase (Chlorobium phaeobacteroides (strain BS1)).